The following is a 267-amino-acid chain: Protein I267L (267 aa).

It belongs to the asfivirus I267L family. Interacts with host RNF135.

Plays a role in the inhibition of host RNA Pol-III-RIGI-mediated innate antiviral response. Mechanistically, interacts with host E3 ubiquitin ligase RNF135, disrupting RNF135-RIGI interaction and impairing RNF135-mediated 'Lys-63'-polyubiquitination and activation of RIGI. This is Protein I267L from African swine fever virus (strain Badajoz 1971 Vero-adapted) (Ba71V).